A 192-amino-acid polypeptide reads, in one-letter code: Peptide methionine sulfoxide reductase MsrA 1 (192 aa).

The active site involves cysteine 25.

It belongs to the MsrA Met sulfoxide reductase family.

It carries out the reaction L-methionyl-[protein] + [thioredoxin]-disulfide + H2O = L-methionyl-(S)-S-oxide-[protein] + [thioredoxin]-dithiol. The catalysed reaction is [thioredoxin]-disulfide + L-methionine + H2O = L-methionine (S)-S-oxide + [thioredoxin]-dithiol. Functionally, has an important function as a repair enzyme for proteins that have been inactivated by oxidation. Catalyzes the reversible oxidation-reduction of methionine sulfoxide in proteins to methionine. This chain is Peptide methionine sulfoxide reductase MsrA 1, found in Rhodopirellula baltica (strain DSM 10527 / NCIMB 13988 / SH1).